Reading from the N-terminus, the 142-residue chain is Organic hydroperoxide resistance protein-like 2 (142 aa).

The protein belongs to the OsmC/Ohr family.

The sequence is that of Organic hydroperoxide resistance protein-like 2 from Staphylococcus epidermidis (strain ATCC 12228 / FDA PCI 1200).